The following is a 421-amino-acid chain: Aspartokinase (421 aa).

7–10 lines the ATP pocket; sequence KYGG. 25–30 lines the substrate pocket; sequence RIVATK. Ser-41 is an ATP binding site. Residues 45–49, Glu-74, 125–126, 151–154, and Ser-154 each bind substrate; these read DTTDE, LD, and RGGS. ATP contacts are provided by residues 174–175, 180–185, and Lys-210; these read SD and YTADPR. 2 consecutive ACT domains span residues 267 to 343 and 349 to 421; these read VTVL…YDDQ and LVGA…GTGR. Substrate is bound by residues Asp-274, 274 to 279, 292 to 294, Gln-298, 360 to 361, 374 to 375, and 381 to 382; these read DKPGEA, NID, VT, NV, and SE.

The protein belongs to the aspartokinase family. In terms of assembly, tetramer consisting of 2 isoforms Alpha (catalytic and regulation) and of a homodimer of 2 isoforms Beta (regulation).

It catalyses the reaction L-aspartate + ATP = 4-phospho-L-aspartate + ADP. The protein operates within amino-acid biosynthesis; L-lysine biosynthesis via DAP pathway; (S)-tetrahydrodipicolinate from L-aspartate: step 1/4. Its pathway is amino-acid biosynthesis; L-methionine biosynthesis via de novo pathway; L-homoserine from L-aspartate: step 1/3. It participates in amino-acid biosynthesis; L-threonine biosynthesis; L-threonine from L-aspartate: step 1/5. Catalyzes the phosphorylation of the beta-carboxyl group of aspartic acid with ATP to yield 4-phospho-L-aspartate, which is involved in the branched biosynthetic pathway leading to the biosynthesis of amino acids lysine, threonine, isoleucine and methionine. The chain is Aspartokinase (lysC) from Corynebacterium efficiens (strain DSM 44549 / YS-314 / AJ 12310 / JCM 11189 / NBRC 100395).